Here is a 368-residue protein sequence, read N- to C-terminus: tRNA 2-selenouridine synthase (368 aa).

The 124-residue stretch at 15 to 138 (FLNQHPIMDV…MRQYLIGVIE (124 aa)) folds into the Rhodanese domain. The active-site S-selanylcysteine intermediate is C98.

Belongs to the SelU family. Monomer.

The enzyme catalyses 5-methylaminomethyl-2-thiouridine(34) in tRNA + selenophosphate + (2E)-geranyl diphosphate + H2O + H(+) = 5-methylaminomethyl-2-selenouridine(34) in tRNA + (2E)-thiogeraniol + phosphate + diphosphate. The catalysed reaction is 5-methylaminomethyl-2-thiouridine(34) in tRNA + (2E)-geranyl diphosphate = 5-methylaminomethyl-S-(2E)-geranyl-thiouridine(34) in tRNA + diphosphate. It carries out the reaction 5-methylaminomethyl-S-(2E)-geranyl-thiouridine(34) in tRNA + selenophosphate + H(+) = 5-methylaminomethyl-2-(Se-phospho)selenouridine(34) in tRNA + (2E)-thiogeraniol. It catalyses the reaction 5-methylaminomethyl-2-(Se-phospho)selenouridine(34) in tRNA + H2O = 5-methylaminomethyl-2-selenouridine(34) in tRNA + phosphate. Functionally, involved in the post-transcriptional modification of the uridine at the wobble position (U34) of tRNA(Lys), tRNA(Glu) and tRNA(Gln). Catalyzes the conversion of 2-thiouridine (S2U-RNA) to 2-selenouridine (Se2U-RNA). Acts in a two-step process involving geranylation of 2-thiouridine (S2U) to S-geranyl-2-thiouridine (geS2U) and subsequent selenation of the latter derivative to 2-selenouridine (Se2U) in the tRNA chain. The sequence is that of tRNA 2-selenouridine synthase from Shewanella baltica (strain OS185).